The sequence spans 396 residues: DNA polymerase processivity factor (396 aa).

The interval alanine 306–isoleucine 396 is disordered. Positions serine 376 to lysine 386 are enriched in basic and acidic residues.

It belongs to the herpesviridae DNA polymerase accessory subunit family. In terms of assembly, homooligomerizes and adopts an oligomeric ring-shaped structure composed of 6 subunits. Forms a complex with the DNA-binding protein, the DNA polymerase subunit, and the alkaline exonuclease.

The protein resides in the virion tegument. The protein localises to the host nucleus. Its function is as follows. Plays an essential role in the viral lytic DNA replication by acting as the polymerase accessory subunit. Stimulates the viral DNA polymerase activity and appears to function with it as a holoenzyme. Increases the processivity of the viral polymerase, probably by acting as a sliding clamp that prevents dissociation of the polymerase from the active template. This chain is DNA polymerase processivity factor (ORF59), found in Homo sapiens (Human).